The sequence spans 372 residues: Cobalt-precorrin-5B C(1)-methyltransferase (372 aa).

It belongs to the CbiD family.

It carries out the reaction Co-precorrin-5B + S-adenosyl-L-methionine = Co-precorrin-6A + S-adenosyl-L-homocysteine. It functions in the pathway cofactor biosynthesis; adenosylcobalamin biosynthesis; cob(II)yrinate a,c-diamide from sirohydrochlorin (anaerobic route): step 6/10. Its function is as follows. Catalyzes the methylation of C-1 in cobalt-precorrin-5B to form cobalt-precorrin-6A. The protein is Cobalt-precorrin-5B C(1)-methyltransferase of Prochlorococcus marinus (strain MIT 9515).